The sequence spans 498 residues: Glycerol kinase (498 aa).

Thr12 provides a ligand contact to ADP. Residues Thr12, Thr13, and Ser14 each coordinate ATP. Thr12 serves as a coordination point for sn-glycerol 3-phosphate. ADP is bound at residue Arg16. Residues Arg82, Glu83, Tyr134, and Asp243 each coordinate sn-glycerol 3-phosphate. Glycerol-binding residues include Arg82, Glu83, Tyr134, Asp243, and Gln244. Residues Thr265 and Gly308 each contribute to the ADP site. ATP is bound by residues Thr265, Gly308, Gln312, and Gly411. Gly411 contributes to the ADP binding site.

Belongs to the FGGY kinase family.

It carries out the reaction glycerol + ATP = sn-glycerol 3-phosphate + ADP + H(+). Its pathway is polyol metabolism; glycerol degradation via glycerol kinase pathway; sn-glycerol 3-phosphate from glycerol: step 1/1. Inhibited by fructose 1,6-bisphosphate (FBP). Functionally, key enzyme in the regulation of glycerol uptake and metabolism. Catalyzes the phosphorylation of glycerol to yield sn-glycerol 3-phosphate. The chain is Glycerol kinase from Brucella suis biovar 1 (strain 1330).